Reading from the N-terminus, the 274-residue chain is Penicillin-insensitive murein endopeptidase (274 aa).

The N-terminal stretch at 1–19 (MKNTVIALLALLASAGSLA) is a signal peptide. 3 disulfide bridges follow: C44-C265, C187-C235, and C216-C223. The Zn(2+) site is built by H110, H113, D120, D147, H150, and H211. Residues 224-263 (EDQAPPPPGDGCGAELQSWFEPPKPGSTPPVKKTPPPLPP) form a disordered region. Pro residues predominate over residues 245-263 (PPKPGSTPPVKKTPPPLPP).

It belongs to the peptidase M74 family. As to quaternary structure, dimer. Zn(2+) is required as a cofactor.

The protein resides in the periplasm. In terms of biological role, murein endopeptidase that cleaves the D-alanyl-meso-2,6-diamino-pimelyl amide bond that connects peptidoglycan strands. Likely plays a role in the removal of murein from the sacculus. The sequence is that of Penicillin-insensitive murein endopeptidase from Klebsiella pneumoniae subsp. pneumoniae (strain ATCC 700721 / MGH 78578).